The sequence spans 180 residues: Large ribosomal subunit protein uL5 (180 aa).

Belongs to the universal ribosomal protein uL5 family. As to quaternary structure, part of the 50S ribosomal subunit; part of the 5S rRNA/L5/L18/L25 subcomplex. Contacts the 5S rRNA and the P site tRNA. Forms a bridge to the 30S subunit in the 70S ribosome.

Functionally, this is one of the proteins that bind and probably mediate the attachment of the 5S RNA into the large ribosomal subunit, where it forms part of the central protuberance. In the 70S ribosome it contacts protein S13 of the 30S subunit (bridge B1b), connecting the 2 subunits; this bridge is implicated in subunit movement. Contacts the P site tRNA; the 5S rRNA and some of its associated proteins might help stabilize positioning of ribosome-bound tRNAs. The chain is Large ribosomal subunit protein uL5 from Chlamydia trachomatis serovar A (strain ATCC VR-571B / DSM 19440 / HAR-13).